Here is a 941-residue protein sequence, read N- to C-terminus: Glycine dehydrogenase (decarboxylating) (941 aa).

An N6-(pyridoxal phosphate)lysine modification is found at Lys692.

The protein belongs to the GcvP family. As to quaternary structure, the glycine cleavage system is composed of four proteins: P, T, L and H. Pyridoxal 5'-phosphate is required as a cofactor.

It carries out the reaction N(6)-[(R)-lipoyl]-L-lysyl-[glycine-cleavage complex H protein] + glycine + H(+) = N(6)-[(R)-S(8)-aminomethyldihydrolipoyl]-L-lysyl-[glycine-cleavage complex H protein] + CO2. In terms of biological role, the glycine cleavage system catalyzes the degradation of glycine. The P protein binds the alpha-amino group of glycine through its pyridoxal phosphate cofactor; CO(2) is released and the remaining methylamine moiety is then transferred to the lipoamide cofactor of the H protein. This Mycobacterium bovis (strain ATCC BAA-935 / AF2122/97) protein is Glycine dehydrogenase (decarboxylating).